Consider the following 300-residue polypeptide: MAAAAEVSLLQECGCKGIRTCLICERQRHRDPPWQICLQKKCCFLYCPDTGWAAGAEGSDLEGWAFPFPGVTLIQDFVTPEEEAEMVRLMDCDPWKLSQSGRKKQDYGPKVNFRKQKLKMAGFQGLPGFSQKVVQRMGLYPGLEDFQPVEQCNLDYSPERGSAIDPHLDDAWLWGERLVSLNLLSATVVSMSPEAPGSLLLCSAPSVRPDAFEDSLVAPSRSVPCQEVEVAITVPRRSLLVLTGAARHQWTHAIHRRHIKARRVCATFRELSSEFLPGGKQQELGQELLQAALSFQGRPV.

The residue at position 2 (Ala-2) is an N-acetylalanine. Positions 148–272 (PVEQCNLDYS…RVCATFRELS (125 aa)) constitute a Fe2OG dioxygenase domain. Fe cation contacts are provided by His-167, Asp-169, and His-252. Arg-263 lines the 2-oxoglutarate pocket.

The protein belongs to the alkB family. Interacts with ZFHX3, MLLT3, MLLT1, HSF4, EP300, TES, EIF3C, MTMR6 and PSMA6. Requires Fe(2+) as cofactor.

Its subcellular location is the cytoplasm. It is found in the nucleus. The protein localises to the nucleolus. It localises to the midbody. It carries out the reaction an N(6)-methyl-2'-deoxyadenosine in DNA + 2-oxoglutarate + O2 = a 2'-deoxyadenosine in DNA + formaldehyde + succinate + CO2. The catalysed reaction is N(6)-methyl-L-lysyl-[protein] + 2-oxoglutarate + O2 = L-lysyl-[protein] + formaldehyde + succinate + CO2. In terms of biological role, dioxygenase that mediates demethylation of actin monomethylated at 'Lys-84' (K84me1), thereby acting as a regulator of actomyosin-processes. Demethylation of actin K84me1 is required for maintaining actomyosin dynamics supporting normal cleavage furrow ingression during cytokinesis and cell migration. In addition to proteins, also demethylates DNA: specifically demethylates DNA methylated on the 6th position of adenine (N(6)-methyladenosine) DNA, thereby regulating Polycomb silencing. The chain is Alpha-ketoglutarate-dependent dioxygenase alkB homolog 4 from Mus musculus (Mouse).